The following is a 589-amino-acid chain: GTPase LSG1-2 (589 aa).

Residues Met1–Asp26 are disordered. Residues Trp158–Pro366 enclose the CP-type G domain. Residues Asp176–Pro180 carry the DARXP motif motif. Residues Asn206 to Asp209 are G4. Asn206 to Asp209 is a GTP binding site. A G5 region spans residues Ala237–Thr239. The segment at Gly315 to Ser322 is G1. Asn318 to Ser323 contacts GTP. Residues Gly341 to His345 form a G2 region. A G3 region spans residues Asp359–Gly362. A GTP-binding site is contributed by Gly362. Acidic residues predominate over residues Gly495–Asn509. 2 disordered regions span residues Gly495–Ile515 and Ser534–Arg589. Positions Ser534–Lys541 match the Nuclear localization signal motif. Basic residues predominate over residues Ser534 to Arg558. Polar residues predominate over residues Pro580–Arg589.

This sequence belongs to the TRAFAC class YlqF/YawG GTPase family. As to expression, ubiquitous, with the highest expression in reproductive and strongly dividing tissues.

It localises to the cytoplasm. It is found in the nucleus. GTPase involved in ribosome biogenesis. Binds to 23S rRNA and associates with 60S pre-ribosomes. Involved in early cotyledon and leaf development. The chain is GTPase LSG1-2 from Arabidopsis thaliana (Mouse-ear cress).